Reading from the N-terminus, the 142-residue chain is Large ribosomal subunit protein uL11 (142 aa).

It belongs to the universal ribosomal protein uL11 family. In terms of assembly, part of the ribosomal stalk of the 50S ribosomal subunit. Interacts with L10 and the large rRNA to form the base of the stalk. L10 forms an elongated spine to which L12 dimers bind in a sequential fashion forming a multimeric L10(L12)X complex. Post-translationally, one or more lysine residues are methylated.

Forms part of the ribosomal stalk which helps the ribosome interact with GTP-bound translation factors. In Idiomarina loihiensis (strain ATCC BAA-735 / DSM 15497 / L2-TR), this protein is Large ribosomal subunit protein uL11.